Here is a 367-residue protein sequence, read N- to C-terminus: UDP-N-acetylglucosamine--N-acetylmuramyl-(pentapeptide) pyrophosphoryl-undecaprenol N-acetylglucosamine transferase (367 aa).

Residues 22–24 (TGG), Asn-134, Arg-170, Ser-198, Ile-253, and Gln-298 each bind UDP-N-acetyl-alpha-D-glucosamine.

This sequence belongs to the glycosyltransferase 28 family. MurG subfamily.

The protein localises to the cell inner membrane. The enzyme catalyses di-trans,octa-cis-undecaprenyl diphospho-N-acetyl-alpha-D-muramoyl-L-alanyl-D-glutamyl-meso-2,6-diaminopimeloyl-D-alanyl-D-alanine + UDP-N-acetyl-alpha-D-glucosamine = di-trans,octa-cis-undecaprenyl diphospho-[N-acetyl-alpha-D-glucosaminyl-(1-&gt;4)]-N-acetyl-alpha-D-muramoyl-L-alanyl-D-glutamyl-meso-2,6-diaminopimeloyl-D-alanyl-D-alanine + UDP + H(+). It functions in the pathway cell wall biogenesis; peptidoglycan biosynthesis. Its function is as follows. Cell wall formation. Catalyzes the transfer of a GlcNAc subunit on undecaprenyl-pyrophosphoryl-MurNAc-pentapeptide (lipid intermediate I) to form undecaprenyl-pyrophosphoryl-MurNAc-(pentapeptide)GlcNAc (lipid intermediate II). The sequence is that of UDP-N-acetylglucosamine--N-acetylmuramyl-(pentapeptide) pyrophosphoryl-undecaprenol N-acetylglucosamine transferase from Xylella fastidiosa (strain M23).